The primary structure comprises 621 residues: 1-deoxy-D-xylulose-5-phosphate synthase (621 aa).

Thiamine diphosphate contacts are provided by residues H76 and 117–119 (AHS). D148 provides a ligand contact to Mg(2+). Thiamine diphosphate is bound by residues 149–150 (GA), N178, Y285, and E367. N178 is a binding site for Mg(2+).

Belongs to the transketolase family. DXPS subfamily. Homodimer. Mg(2+) serves as cofactor. Requires thiamine diphosphate as cofactor.

It carries out the reaction D-glyceraldehyde 3-phosphate + pyruvate + H(+) = 1-deoxy-D-xylulose 5-phosphate + CO2. The protein operates within metabolic intermediate biosynthesis; 1-deoxy-D-xylulose 5-phosphate biosynthesis; 1-deoxy-D-xylulose 5-phosphate from D-glyceraldehyde 3-phosphate and pyruvate: step 1/1. Its function is as follows. Catalyzes the acyloin condensation reaction between C atoms 2 and 3 of pyruvate and glyceraldehyde 3-phosphate to yield 1-deoxy-D-xylulose-5-phosphate (DXP). The protein is 1-deoxy-D-xylulose-5-phosphate synthase of Aromatoleum aromaticum (strain DSM 19018 / LMG 30748 / EbN1) (Azoarcus sp. (strain EbN1)).